The chain runs to 602 residues: uncharacterized protein (602 aa).

N-linked (GlcNAc...) asparagine glycans are attached at residues Asn-305, Asn-497, and Asn-577.

In terms of processing, N-glycosylated.

It is found in the vacuole. This is an uncharacterized protein from Saccharomyces cerevisiae (strain ATCC 204508 / S288c) (Baker's yeast).